Consider the following 251-residue polypeptide: Triosephosphate isomerase 1 (251 aa).

9-11 (NWK) is a binding site for substrate. The Electrophile role is filled by His-95. Residue Glu-167 is the Proton acceptor of the active site. Residues Gly-173, Ser-213, and 234-235 (GG) each bind substrate.

It belongs to the triosephosphate isomerase family. Homodimer.

It localises to the cytoplasm. The catalysed reaction is D-glyceraldehyde 3-phosphate = dihydroxyacetone phosphate. Its pathway is carbohydrate biosynthesis; gluconeogenesis. The protein operates within carbohydrate degradation; glycolysis; D-glyceraldehyde 3-phosphate from glycerone phosphate: step 1/1. Involved in the gluconeogenesis. Catalyzes stereospecifically the conversion of dihydroxyacetone phosphate (DHAP) to D-glyceraldehyde-3-phosphate (G3P). The chain is Triosephosphate isomerase 1 from Listeria monocytogenes serovar 1/2a (strain ATCC BAA-679 / EGD-e).